A 359-amino-acid chain; its full sequence is Adenosine 3'-phospho 5'-phosphosulfate transporter 1 (359 aa).

The next 7 membrane-spanning stretches (helical) occupy residues 26–46 (NMKLALATGGIMGSFLLYGIL), 68–88 (STFLVLSNRVFAALMAIVIVL), 157–177 (YSIALTITTGCMIFFLTGKIS), 184–204 (TSYGIILMALYMFFDSFTSTF), 228–248 (SIISVFILILNGRLFPAIEFI), 254–276 (VFFDSTMLSASAGLGQMVIYYTI), and 300–320 (TLIYLHPLSNTQWIGALLVFG). The tract at residues 332 to 359 (KKHGGHSHGGSNAATTTTPSNNSNNTEK) is disordered. Positions 340-359 (GGSNAATTTTPSNNSNNTEK) are enriched in low complexity.

It belongs to the nucleotide-sugar transporter family. SLC35B subfamily.

It localises to the golgi apparatus membrane. The enzyme catalyses 3'-phosphoadenylyl sulfate(in) + adenosine 3',5'-bisphosphate(out) = 3'-phosphoadenylyl sulfate(out) + adenosine 3',5'-bisphosphate(in). Probably functions as a 3'-phosphoadenylyl sulfate:adenosine 3',5'-bisphosphate antiporter at the Golgi membranes. Mediates the transport from the cytosol into the lumen of the Golgi of 3'-phosphoadenylyl sulfate/adenosine 3'-phospho 5'-phosphosulfate (PAPS), a universal sulfuryl donor for sulfation events that take place in that compartment. This chain is Adenosine 3'-phospho 5'-phosphosulfate transporter 1 (slc35b2), found in Dictyostelium discoideum (Social amoeba).